A 597-amino-acid polypeptide reads, in one-letter code: Cytosolic Fe-S cluster assembly factor NAR1 (597 aa).

Position 20 (cysteine 20) interacts with [4Fe-4S] cluster. A disordered region spans residues 25 to 46; that stretch reads ESLPQKESQSENPYEVTKEDKV. [4Fe-4S] cluster contacts are provided by cysteine 61, cysteine 64, cysteine 67, cysteine 208, and cysteine 263. The disordered stretch occupies residues 422 to 448; sequence VSRLPGAKPQAVTSSANRRQPMSRNAA. Positions 432-444 are enriched in polar residues; it reads AVTSSANRRQPMS. [4Fe-4S] cluster is bound by residues cysteine 464 and cysteine 468.

Belongs to the NARF family.

Component of the cytosolic Fe/S protein assembly machinery. Required for maturation of extramitochondrial Fe/S proteins. May play a role in the transfer of pre-assembled Fe/S clusters to target apoproteins. The sequence is that of Cytosolic Fe-S cluster assembly factor NAR1 (NAR1) from Neosartorya fischeri (strain ATCC 1020 / DSM 3700 / CBS 544.65 / FGSC A1164 / JCM 1740 / NRRL 181 / WB 181) (Aspergillus fischerianus).